A 284-amino-acid chain; its full sequence is L-ribulose-5-phosphate 3-epimerase UlaE (284 aa).

Belongs to the L-ribulose-5-phosphate 3-epimerase family.

It catalyses the reaction L-ribulose 5-phosphate = L-xylulose 5-phosphate. The protein operates within cofactor degradation; L-ascorbate degradation; D-xylulose 5-phosphate from L-ascorbate: step 3/4. Catalyzes the isomerization of L-xylulose-5-phosphate to L-ribulose-5-phosphate. Is involved in the anaerobic L-ascorbate utilization. The chain is L-ribulose-5-phosphate 3-epimerase UlaE from Salmonella dublin (strain CT_02021853).